A 134-amino-acid polypeptide reads, in one-letter code: Holo-[acyl-carrier-protein] synthase (134 aa).

Mg(2+)-binding residues include aspartate 8 and glutamate 57.

Belongs to the P-Pant transferase superfamily. AcpS family. It depends on Mg(2+) as a cofactor.

It localises to the cytoplasm. The catalysed reaction is apo-[ACP] + CoA = holo-[ACP] + adenosine 3',5'-bisphosphate + H(+). Functionally, transfers the 4'-phosphopantetheine moiety from coenzyme A to a Ser of acyl-carrier-protein. In Rhizobium leguminosarum bv. trifolii (strain WSM2304), this protein is Holo-[acyl-carrier-protein] synthase.